The primary structure comprises 399 residues: Argininosuccinate synthase (399 aa).

8–16 (AYSGGLDTS) contributes to the ATP binding site. Residue tyrosine 87 participates in L-citrulline binding. Glycine 117 lines the ATP pocket. L-aspartate contacts are provided by threonine 119, asparagine 123, and aspartate 124. Position 123 (asparagine 123) interacts with L-citrulline. Positions 127, 175, 260, and 272 each coordinate L-citrulline.

This sequence belongs to the argininosuccinate synthase family. Type 1 subfamily. As to quaternary structure, homotetramer.

It localises to the cytoplasm. The catalysed reaction is L-citrulline + L-aspartate + ATP = 2-(N(omega)-L-arginino)succinate + AMP + diphosphate + H(+). The protein operates within amino-acid biosynthesis; L-arginine biosynthesis; L-arginine from L-ornithine and carbamoyl phosphate: step 2/3. The protein is Argininosuccinate synthase of Rhodococcus jostii (strain RHA1).